Reading from the N-terminus, the 644-residue chain is Methionine--tRNA ligase (644 aa).

A 'HIGH' region motif is present at residues 14–24; it reads YYPSAKLHIGN. Zn(2+)-binding residues include Cys129, Cys132, Cys146, and Cys149. The short motif at 299–303 is the 'KMSKS' region element; that stretch reads KMSKS. Lys302 is an ATP binding site. One can recognise a tRNA-binding domain in the interval 542–644; that stretch reads DVDKLDLRVV…EDIPTGSIVR (103 aa).

The protein belongs to the class-I aminoacyl-tRNA synthetase family. MetG type 2A subfamily. In terms of assembly, homodimer. The cofactor is Zn(2+).

It is found in the cytoplasm. It catalyses the reaction tRNA(Met) + L-methionine + ATP = L-methionyl-tRNA(Met) + AMP + diphosphate. In terms of biological role, is required not only for elongation of protein synthesis but also for the initiation of all mRNA translation through initiator tRNA(fMet) aminoacylation. The polypeptide is Methionine--tRNA ligase (metG) (Clostridium acetobutylicum (strain ATCC 824 / DSM 792 / JCM 1419 / IAM 19013 / LMG 5710 / NBRC 13948 / NRRL B-527 / VKM B-1787 / 2291 / W)).